We begin with the raw amino-acid sequence, 184 residues long: Adenine phosphoribosyltransferase (184 aa).

It belongs to the purine/pyrimidine phosphoribosyltransferase family. In terms of assembly, homodimer.

It is found in the cytoplasm. The enzyme catalyses AMP + diphosphate = 5-phospho-alpha-D-ribose 1-diphosphate + adenine. The protein operates within purine metabolism; AMP biosynthesis via salvage pathway; AMP from adenine: step 1/1. Catalyzes a salvage reaction resulting in the formation of AMP, that is energically less costly than de novo synthesis. This Sphingopyxis alaskensis (strain DSM 13593 / LMG 18877 / RB2256) (Sphingomonas alaskensis) protein is Adenine phosphoribosyltransferase.